A 144-amino-acid chain; its full sequence is Maximins 6/Hv (144 aa).

A signal peptide spans 1–18; that stretch reads MNFKYIVAVSFLIASGYA. The propeptide occupies 19-43; that stretch reads RSEENDVQSLSQREVLEEETLREIR. Asparagine 70 carries the asparagine amide modification. The propeptide occupies 74–123; that stretch reads TAKGHEVMKRLEAVMRDLDSLDHPEEASERETRGFNQEEIANLFTKKEKR. Position 143 is an isoleucine amide (isoleucine 143).

It belongs to the bombinin family. As to expression, expressed by the skin glands.

The protein resides in the secreted. Shows antimicrobial activity against bacteria and against the fungus C.albicans. It has little hemolytic activity. In terms of biological role, shows antimicrobial activity against bacteria and against the fungus C.albicans. Shows strong hemolytic activity. This is Maximins 6/Hv from Bombina maxima (Giant fire-bellied toad).